We begin with the raw amino-acid sequence, 432 residues long: Metacaspase-1 (432 aa).

Basic residues predominate over residues 1–11 (MEVMDHHHHTS). Disordered regions lie at residues 1 to 21 (MEVM…TTRR) and 41 to 87 (PQPG…PNAP). Positions 12-21 (STRPNPTTRR) are enriched in low complexity. The span at 46 to 74 (GAPPPQGGYGYPQPPPPQQPYGYSQPPPQ) shows a compositional bias: pro residues. Active-site residues include His223 and Cys279.

The protein belongs to the peptidase C14B family.

In terms of biological role, involved in cell death (apoptosis). The sequence is that of Metacaspase-1 (casA) from Sclerotinia sclerotiorum (strain ATCC 18683 / 1980 / Ss-1) (White mold).